Here is a 490-residue protein sequence, read N- to C-terminus: Colicin-5 (490 aa).

The segment covering 1 to 20 (MDKVTDNSPDVESTESTEGS) has biased composition (polar residues). Disordered stretches follow at residues 1-29 (MDKVTDNSPDVESTESTEGSFPTVGVDTG) and 146-171 (QKAREEAEAAEKALREAERQRDEIAR). Residues 146–170 (QKAREEAEAAEKALREAERQRDEIA) show a composition bias toward basic and acidic residues. The helical transmembrane segment at 447 to 467 (IVALMFSFIVGVPLGFWGIAI) threads the bilayer.

This sequence belongs to the channel forming colicin family.

It localises to the host membrane. Functionally, this colicin is a channel-forming colicin. This class of transmembrane toxins depolarize the cytoplasmic membrane, leading to dissipation of cellular energy. Its function is as follows. Colicins are polypeptide toxins produced by and active against E.coli and closely related bacteria. This chain is Colicin-5 (cfa), found in Escherichia coli.